The chain runs to 207 residues: Transcription factor bHLH149 (207 aa).

The tract at residues 1–25 is disordered; that stretch reads MVESLFPSIENTGESSRRKKPRISE. The bHLH domain maps to 132–181; it reads KSRKGLTETNRIKLPAVERKLKILGRLVPGCRKVSVPNLLDEATDYIAAL.

As to quaternary structure, homodimer. Interacts with PRE3.

The protein resides in the nucleus. In terms of biological role, atypical bHLH transcription factor probably unable to bind DNA. Negatively regulates brassinosteroid signaling. The sequence is that of Transcription factor bHLH149 (BHLH149) from Arabidopsis thaliana (Mouse-ear cress).